The primary structure comprises 515 residues: Maturase K (515 aa).

The protein belongs to the intron maturase 2 family. MatK subfamily.

It localises to the plastid. It is found in the chloroplast. Its function is as follows. Usually encoded in the trnK tRNA gene intron. Probably assists in splicing its own and other chloroplast group II introns. In Pinus pinea (Italian stone pine), this protein is Maturase K.